Reading from the N-terminus, the 2766-residue chain is MTALVLWVSTLLSSVCLVAANIFEYQVDAQPLRPCELQREKAFLKQAEYVPQCSEDGSFQTVQCQNDGQSCWCVDSDGREVPGSRQLGRPTVCLSFCQLHKQRILLGSYINSTDALYLPQCQDSGNYAPVQCDLQRVQCWCVDTEGMEVYGTRQQGRPTRCPRSCEIRNRRLLHGVGDRSPPQCTADGEFMPVQCKFVNTTDMMIFDLIHNYNRFPDAFVTFSSFRGRFPEVSGYCYCADSQGRELAETGLELLLDEIYDTIFAGLDQASTFTQSTMYRILQRRFLAIQLVISGRFRCPTKCEVEQFAATRFGHSYIPRCHRDGHYQTVQCQTEGMCWCVDAQGREVPGTRQQGQPPSCAADQSCALERQQALSRFYFETPDYFSPQDLLSSEDRLAPVSGVRSDTSCPPRIKELFVDSGLLRSIAVEHYQRLSESRSLLREAIRAVFPSRELAGLALQFTTNPKRLQQNLFGGTFLANAAQFNLSGALGTRSTFNFSQFFQQFGLPGFLNRDRVTTLAKLLPVRLDSSSTPETLRVSEKTVAMNKRVVGNFGFKVNLQENQDALKFLVSLLELPEFLVFLQRAVSVPEDIARDLGDVMEMVFSAQACKQMPGKFFVPSCTAGGSYEDIQCYAGECWCVDSRGKELDGSRVRGGRPRCPTKCEKQRAQMQSLASAQPAGSSFFVPTCTREGYFLPVQCFNSECYCVDTEGQVIPGTQSTVGEAKQCPSVCQLQAEQAFLGVVGVLLSNSSMVPSISNVYIPQCSASGQWRHVQCDGPHEQVFEWYERWKTQNGDGQELTPAALLMKIVSYREVASRNFSLFLQSLYDAGQQRIFPVLAQYPSLQDVPQVVLEGATTPPGENIFLDPYIFWQILNGQLSQYPGPYSDFNMPLEHFNLRSCWCVDEAGQKLDGTQTKPGEIPACPGPCEEVKLRVLKFIKETEEIVSASNASSFPLGESFLVAKGIQLTSEELDLPPQFPSRDAFSEKFLRGGEYAIRLAAQSTLTFYQSLRASLGKSDGAASLLWSGPYMPQCNMIGGWEPVQCHAGTGQCWCVDGRGEFIPGSLMSRSSQMPQCPTNCELSRASGLISAWKQAGPQRNPGPGDLFIPVCLQTGEYVRKQTSGTGTWCVDPASGEGMPVNTNGSAQCPGLCDVLKSRALSRKVGLGYSPVCEALDGAFSPVQCDLAQGSCWCVLGSGEEVPGTRVVGTQPACESPQCPLPFSGSDVADGVIFCETASSSGVTTVQQCQLLCRQGLRSAFSPGPLICSLESQHWVTLPPPRACQRPQLWQTMQTQAHFQLLLPPGKMCSVDYSGLLQAFQVFILDELIARGFCQIQVKTFGTLVSSTVCDNSSIQVGCLTAERLGVNVTWKLQLEDISVGSLPDLYSIERAVTGQDLLGRFADLIQSGRFQLHLDSKTFSADTTLYFLNGDSFVTSPRTQLGCMEGFYRVPTTRQDALGCVKCPEGSFSQDGRCTPCPAGTYQEQAGSSACIPCPRGRTTITTGAFSKTHCVTDCQKNEAGLQCDQNGQYQASQKNRDSGEVFCVDSEGRKLQWLQTEAGLSESQCLMIRKFDKAPESKVIFDANSPVIVKSSVPSADSPLVQCLTDCANDEACSFLTVSTMESEVSCDFYSWTRDNFACVTSDQEQDAMGSLKATSFGSLRCQVKVRNSGKDSLAVYVKKGYESTAAGQKSFEPTGFQNVLSGLYSPVVFSASGANLTDTHTYCLLACDNDSCCDGFIITQVKGGPTICGLLSSPDILLCHINDWRDTSATQANATCAGVTYDQGSRQMTLSLGGQEFLQGLALLEGTQDSFTSFQQVYLWKDSDMGSRPESMGCERGMVPRSDFPGDMATELFSPVDITQVIVNTSHSLPSQQYWLFTHLFSAEQANLWCLSRCAQEPIFCQLADITKSSSLYFTCFLYPEAQVCDNVMESNAKNCSQILPHQPTALFRRKVVLNDRVKNFYTRLPFQKLTGISIRDKVPMSGKLISNGFFECERLCDRDPCCTGFGFLNVSQLQGGEVTCLTLNSMGIQTCNEESGATWRILDCGSEDTEVHTYPFGWYQKPAVWSDTPSFCPSAALQSLTEEKVTSDSWQTLALSSVIVDPSIKHFDVAHISTAATSNFSMAQDFCLQQCSRHQDCLVTTLQIQPGVVRCVFYPDIQNCIHSLRSHTCWLLLHEEATYIYRKSGIPLVQSDVTSTPSVRIDSFGQLQGGSQVIKVGTAWKQVYRFLGVPYAAPPLADNRFRAPEVLNWTGSWDATKPRASCWQPGTRTPTPPQINEDCLYLNVFVPENLVSNASVLVFFHNTMEMEGSGGQLTIDGSILAAVGNFIVVTANYRLGVFGFLSSGSDEVAGNWGLLDQVAALTWVQSHIGAFGGDPQRVTLAADRSGADVASIHLLISRPTRLQLFRKALLMGGSALSPAAIISPERAQQQAAALAKEVGCPTSSIQEVVSCLRQKPANILNDAQTKLLAVSGPFHYWGPVVDGQYLRELPSRRLKRPLPVKVDLLIGGSQDDGLINRAKAVKQFEESQGRTNSKTAFYQALQNSLGGEDSDARILAAAVWYYSLEHSTDDYASFSRALENATRDYFIICPMVNMASLWARRTRGNVFMYHVPESYGHGSLELLADVQYAFGLPFYSAYQGQFSTEEQSLSLKVMQYFSNFIRSGNPNYPHEFSRKAAEFATPWPDFIPGAGGESYKELSAQLPNRQGLKQADCSFWSKYIQTLKDADGAKDAQLTKSEEEDLEVGPGLEEDLSGSLEPVPKSYSK.

Residues 1 to 20 form the signal peptide; the sequence is MTALVLWVSTLLSSVCLVAA. Residue Tyr25 is modified to Iodotyrosine; alternate. A Sulfotyrosine; alternate modification is found at Tyr25. Tyr25 is subject to Thyroxine; alternate. Tyr25 carries the post-translational modification Triiodothyronine; alternate. 4 Thyroglobulin type-1 domains span residues 32–93, 94–161, 162–298, and 299–359; these read LRPC…PTVC, LSFC…PTRC, PRSC…RFRC, and PTKC…PPSC. 8 disulfide bridges follow: Cys35–Cys53, Cys64–Cys71, Cys73–Cys93, Cys97–Cys121, Cys132–Cys139, Cys141–Cys161, Cys165–Cys184, and Cys195–Cys236. Position 109 is an iodotyrosine (Tyr109). The N-linked (GlcNAc...) asparagine glycan is linked to Asn111. An Iodotyrosine; alternate modification is found at Tyr150. A Diiodotyrosine; alternate modification is found at Tyr150. Asn199 carries N-linked (GlcNAc...) asparagine glycosylation. Iodotyrosine occurs at positions 235 and 259. 9 cysteine pairs are disulfide-bonded: Cys302–Cys320, Cys331–Cys337, Cys339–Cys359, Cys365–Cys620, Cys408–Cys608, Cys631–Cys636, Cys638–Cys658, Cys662–Cys687, and Cys698–Cys703. Residues Asn484 and Asn496 are each glycosylated (N-linked (GlcNAc...) asparagine). 6 Thyroglobulin type-1 domains span residues 605-658, 659-726, 727-922, 923-1074, 1075-1146, and 1147-1211; these read AQAC…RPRC, PTKC…AKQC, PSVC…IPAC, PGPC…MPQC, PTNC…SAQC, and PGLC…QPAC. Tyr704 is subject to Iodotyrosine; alternate. A Thyroxine; alternate modification is found at Tyr704. Tyr704 bears the Triiodothyronine; alternate mark. Tyr704 carries the diiodotyrosine; alternate modification. Cystine bridges form between Cys705–Cys726, Cys730–Cys763, Cys774–Cys899, Cys901–Cys922, Cys926–Cys1032, Cys1043–Cys1050, Cys1052–Cys1074, Cys1078–Cys1109, Cys1127–Cys1146, Cys1150–Cys1170, Cys1182–Cys1189, Cys1191–Cys1211, Cys1216–Cys1265, Cys1232–Cys1246, Cys1306–Cys1356, and Cys1331–Cys1347. N-linked (GlcNAc...) asparagine glycosylation is present at Asn748. Tyr785 carries the post-translational modification Iodotyrosine. N-linked (GlcNAc...) asparagine glycosylation is present at Asn817. Tyr867 bears the Iodotyrosine; alternate mark. Tyr867 carries the diiodotyrosine; alternate modification. Tyr884 is modified (diiodotyrosine). A glycan (N-linked (GlcNAc...) asparagine) is linked at Asn948. Tyr993 carries the post-translational modification Iodotyrosine; alternate. Tyr993 carries the diiodotyrosine; alternate modification. N-linked (GlcNAc...) asparagine glycosylation occurs at Asn1141. Tyr1310 carries the post-translational modification Iodotyrosine. Tyr1310 carries the post-translational modification Thyroxine. N-linked (GlcNAc...) asparagine glycosylation is found at Asn1349 and Asn1365. Disulfide bonds link Cys1441-Cys1458, Cys1461-Cys1472, Cys1475-Cys1489, Cys1492-Cys1509, Cys1513-Cys1522, Cys1542-Cys1564, Cys1602-Cys1626, Cys1606-Cys1612, and Cys1638-Cys1661. 3 Type II repeats span residues 1455-1468, 1469-1485, and 1486-1502; these read ALGC…SFSQ, DGRC…EQAG, and SSAC…ITTG. Residues 1510–1564 enclose the Thyroglobulin type-1 11 domain; sequence VTDCQKNEAGLQCDQNGQYQASQKNRDSGEVFCVDSEGRKLQWLQTEAGLSESQC. The Type IIIA repeat unit spans residues 1602–1722; sequence CLTDCANDEA…GANLTDTHTY (121 aa). N-linked (GlcNAc...) asparagine glycans are attached at residues Asn1715, Asn1729, Asn1773, and Asn1864. 4 disulfides stabilise this stretch: Cys1723–Cys1748, Cys1727–Cys1733, Cys1732–Cys1834, and Cys1759–Cys1776. A Type IIIB repeat occupies 1723–1889; the sequence is CLLACDNDSC…LFSAEQANLW (167 aa). Disulfide bonds link Cys1890–Cys1916, Cys1894–Cys1901, Cys1925–Cys1936, Cys1993–Cys2021, Cys1997–Cys2003, Cys2002–Cys2073, and Cys2032–Cys2045. A Type IIIA repeat occupies 1890-1992; it reads CLSRCAQEPI…GKLISNGFFE (103 aa). The N-linked (GlcNAc...) asparagine glycan is linked to Asn1935. One copy of the Type IIIB repeat lies at 1993 to 2125; sequence CERLCDRDPC…AATSNFSMAQ (133 aa). Asn2010 carries an N-linked (GlcNAc...) asparagine glycan. N-linked (GlcNAc...) asparagine glycosylation occurs at Asn2120. A Type IIIA repeat occupies 2126–2183; sequence DFCLQQCSRHQDCLVTTLQIQPGVVRCVFYPDIQNCIHSLRSHTCWLLLHEEATYIYR. 3 disulfide bridges follow: Cys2128–Cys2152, Cys2132–Cys2138, and Cys2161–Cys2170. Tyr2182 carries the iodotyrosine modification. Residues 2186 to 2766 are cholinesterase-like (ChEL); it reads GIPLVQSDVT…LEPVPKSYSK (581 aa). N-linked (GlcNAc...) asparagine glycosylation occurs at Asn2249. Cys2263 and Cys2280 are disulfide-bonded. The N-linked (GlcNAc...) asparagine glycan is linked to Asn2294. A disulfide bond links Cys2441 and Cys2452. Tyr2539 is subject to Thyroxine. The residue at position 2572 (Tyr2572) is an Iodotyrosine; alternate. Tyr2572 carries the post-translational modification Thyroxine; alternate. Tyr2572 carries the post-translational modification Triiodothyronine; alternate. A Diiodotyrosine; alternate modification is found at Tyr2572. A glycan (N-linked (GlcNAc...) asparagine) is linked at Asn2581. Residues Tyr2586 and Tyr2616 each carry the iodotyrosine modification. Cys2590 and Cys2714 are joined by a disulfide. Tyr2696 carries the post-translational modification Diiodotyrosine. Residues 2729–2766 form a disordered region; sequence GAKDAQLTKSEEEDLEVGPGLEEDLSGSLEPVPKSYSK. The span at 2739–2753 shows a compositional bias: acidic residues; the sequence is EEEDLEVGPGLEEDL. Tyr2764 carries the post-translational modification Iodotyrosine; alternate. Residue Tyr2764 is modified to Thyroxine; alternate. Tyr2764 is modified (triiodothyronine; alternate). A Diiodotyrosine; alternate modification is found at Tyr2764.

It belongs to the type-B carboxylesterase/lipase family. As to quaternary structure, monomer. Homodimer (via ChEL region); occurs in the endoplasmic reticulum and is required for export to the Golgi apparatus. Homooligomer; disulfide-linked; stored in this form in the thyroid follicle lumen. In terms of processing, iodinated on tyrosine residues by TPO. There are 4 pairs of iodinated tyrosines used for coupling: acceptor Tyr-25 is coupled to donor Tyr-150 or Tyr-235, acceptor Tyr-2572 is coupled to donor Tyr-2539, acceptor Tyr-2764 in monomer 1 is coupled to donor Tyr-2764 in monomer 2 and acceptor Tyr-1310 in monomer 1 is coupled to donor Tyr-109 in monomer 2. Sulfated tyrosines are desulfated during iodination. Post-translationally, undergoes sequential proteolysis by cathepsins to release thyroxine (T4) and triiodothyronine (T3) hormones. In the thyroid follicle lumen, cross-linked TG (storage form) is solubilized by limited proteolysis mediated by cathepsins CTSB and/or CTSL. Partially cleaved TG is further processed by CTSK/cathepsin K and/or CTSL resulting in the release of T4. Following endocytosis, further processing occurs leading to the release of T3 and more T4 hormones. As to expression, specifically expressed in the thyroid gland.

It localises to the secreted. Functionally, acts as a substrate for the production of iodinated thyroid hormones thyroxine (T4) and triiodothyronine (T3). The synthesis of T3 and T4 involves iodination of selected tyrosine residues of TG/thyroglobulin followed by their oxidative coupling. Following TG re-internalization and lysosomal-mediated proteolysis, T3 and T4 are released from the polypeptide backbone leading to their secretion into the bloodstream. One dimer produces 7 thyroid hormone molecules. In Mus musculus (Mouse), this protein is Thyroglobulin (Tg).